The following is a 157-amino-acid chain: Small ribosomal subunit protein uS7 (157 aa).

Belongs to the universal ribosomal protein uS7 family. Part of the 30S ribosomal subunit. Contacts proteins S9 and S11.

One of the primary rRNA binding proteins, it binds directly to 16S rRNA where it nucleates assembly of the head domain of the 30S subunit. Is located at the subunit interface close to the decoding center, probably blocks exit of the E-site tRNA. The polypeptide is Small ribosomal subunit protein uS7 (Bdellovibrio bacteriovorus (strain ATCC 15356 / DSM 50701 / NCIMB 9529 / HD100)).